A 132-amino-acid chain; its full sequence is Small ribosomal subunit protein uS9 (132 aa).

The tract at residues 103-132 (NGLLTRDDRTKERKKPGLKRARKAPQYTKR) is disordered. The segment covering 114–132 (ERKKPGLKRARKAPQYTKR) has biased composition (basic residues).

This sequence belongs to the universal ribosomal protein uS9 family.

The protein is Small ribosomal subunit protein uS9 of Dehalococcoides mccartyi (strain CBDB1).